The following is a 329-amino-acid chain: NADH-quinone oxidoreductase subunit H (329 aa).

9 helical membrane passes run 9 to 29, 42 to 62, 75 to 95, 117 to 137, 154 to 174, 188 to 208, 238 to 258, 269 to 291, and 309 to 329; these read LIKI…ATYI, GPCY…IKLF, FIFT…MAPI, IGFL…ILAG, IQLL…LMVV, GGFL…FLIA, LKWG…SFVI, WGFI…LSMW, and WKIM…VILI.

The protein belongs to the complex I subunit 1 family. NDH-1 is composed of 14 different subunits. Subunits NuoA, H, J, K, L, M, N constitute the membrane sector of the complex.

It is found in the cell inner membrane. It catalyses the reaction a quinone + NADH + 5 H(+)(in) = a quinol + NAD(+) + 4 H(+)(out). Functionally, NDH-1 shuttles electrons from NADH, via FMN and iron-sulfur (Fe-S) centers, to quinones in the respiratory chain. The immediate electron acceptor for the enzyme in this species is believed to be ubiquinone. Couples the redox reaction to proton translocation (for every two electrons transferred, four hydrogen ions are translocated across the cytoplasmic membrane), and thus conserves the redox energy in a proton gradient. This subunit may bind ubiquinone. The polypeptide is NADH-quinone oxidoreductase subunit H (Helicobacter pylori (strain J99 / ATCC 700824) (Campylobacter pylori J99)).